The following is a 442-amino-acid chain: Cytochrome c biogenesis CcmF C-terminal-like mitochondrial protein (442 aa).

A run of 3 helical transmembrane segments spans residues 6–26 (NFFF…PVLL), 39–59 (PFFN…LVYL), and 122–142 (YLES…FFLA). A disordered region spans residues 151–175 (RARRRKGQTLRPNGNEQRRNDKMRC). Over residues 166-175 (EQRRNDKMRC) the composition is skewed to basic and acidic residues. The chain crosses the membrane as a helical span at residues 411-431 (FIFFIWIGFMLASLGGLPSLL).

This sequence belongs to the CcmF/CycK/Ccl1/NrfE/CcsA family. In terms of assembly, interacts with CCMFN2.

The protein resides in the mitochondrion inner membrane. Forms a complex with CCMFN1, CCMFN2 and CCMH that performs the assembly of heme with c-type apocytochromes in mitochondria. The polypeptide is Cytochrome c biogenesis CcmF C-terminal-like mitochondrial protein (CCMFC) (Arabidopsis thaliana (Mouse-ear cress)).